Reading from the N-terminus, the 875-residue chain is Valine--tRNA ligase (875 aa).

Positions 45-55 (PNVTGVLHMGH) match the 'HIGH' region motif. The short motif at 524-528 (KMSKS) is the 'KMSKS' region element. ATP is bound at residue Lys-527. A coiled-coil region spans residues 803-837 (VKSLIDKTKELIRLEKQLEKYKMLNISVSKKLENE).

Belongs to the class-I aminoacyl-tRNA synthetase family. ValS type 1 subfamily. Monomer.

Its subcellular location is the cytoplasm. It catalyses the reaction tRNA(Val) + L-valine + ATP = L-valyl-tRNA(Val) + AMP + diphosphate. Catalyzes the attachment of valine to tRNA(Val). As ValRS can inadvertently accommodate and process structurally similar amino acids such as threonine, to avoid such errors, it has a 'posttransfer' editing activity that hydrolyzes mischarged Thr-tRNA(Val) in a tRNA-dependent manner. The polypeptide is Valine--tRNA ligase (Borreliella burgdorferi (strain ATCC 35210 / DSM 4680 / CIP 102532 / B31) (Borrelia burgdorferi)).